The chain runs to 1071 residues: SLIT-ROBO Rho GTPase-activating protein 2 (1071 aa).

The F-BAR domain occupies 22-325 (KEIRAQLTEQ…AVENLDATSD (304 aa)). Over residues 181–203 (LKEAEKQEEKQIGKSVKQEDRQT) the composition is skewed to basic and acidic residues. The segment at 181–211 (LKEAEKQEEKQIGKSVKQEDRQTPRSPDSTA) is disordered. The residue at position 206 (Ser206) is a Phosphoserine. The stretch at 362–401 (VQSELVQRCQQLQSRLSTLKIENEEVKKTMEATLQTIQDI) forms a coiled coil. Phosphoserine is present on residues Ser427, Ser500, Ser691, and Ser695. One can recognise a Rho-GAP domain in the interval 489-679 (ARRSSTVRKQ…TIIIQHENIF (191 aa)). The segment at 698-726 (DYCDSPHGETTSVEDSTQDVTAEHHTSDD) is disordered. Residues 705-717 (GETTSVEDSTQDV) show a composition bias toward polar residues. Position 724 is a phosphoserine (Ser724). One can recognise an SH3 domain in the interval 728-787 (CEPIEAIAKFDYVGRTARELSFKKGASLLLYQRASDDWWEGRHNGIDGLIPHQYIVVQDT). Ser795 carries the phosphoserine modification. The tract at residues 837-936 (QRKRPESGSI…RSKSFNNHRP (100 aa)) is disordered. Positions 855–866 (HGLSSSLTDSSS) are enriched in low complexity. Polar residues-rich tracts occupy residues 874 to 885 (RPSSQPIMSQSL) and 897 to 907 (GHGSLNSISRH). Ser916 carries the post-translational modification Phosphoserine. A compositionally biased stretch (polar residues) spans 919–933 (IRKTATAGRSKSFNN). Position 927 is a symmetric dimethylarginine; by PRMT5 (Arg927). Phosphoserine is present on Ser930. Residues 940–967 (EVIAQDIEATMNSALNELRELERQSSVK) are a coiled coil. The interval 983–1012 (SPVVAPTSEPSSPLHTQLLKDPEPAFQRSA) is disordered. Ser990, Ser994, Ser1013, and Ser1027 each carry phosphoserine. Residues 1029-1071 (KMAAPVKPPATRPKPTVFPKTNATSPGVNSSTSPQSTDKSCTV) are disordered. The span at 1047–1071 (PKTNATSPGVNSSTSPQSTDKSCTV) shows a compositional bias: polar residues.

Homodimer. Heterodimer; forms a heterodimer with SRGAP2C, altering SRGAP2 function. Forms a heterooligomer with SRGAP1 and SRGAP3 through its F-BAR domain. Interacts (via SH3 domain) with GPHN. Interacts (via SH3 domain) with FMNL1 (activated by RAC1); regulates the actin filament severing activity of FMNL1 and actin dynamics. Interacts (via SH3 domain) with FMNL3. Interacts with RAC1; specifically stimulates RAC1 GTPase activity. Interacts (via F-BAR domain) with HOMER1. Interacts with ROBO1 and ROBO2. Interacts with FASLG. Interacts with PRMT5. Methylation at Arg-927 is required for the stimulation of cell migration, dimerization and localization at the plasma membrane protrusions.

Its subcellular location is the cell membrane. The protein localises to the cell projection. It is found in the dendritic spine. The protein resides in the postsynaptic density. It localises to the postsynaptic cell membrane. Its subcellular location is the lamellipodium. The protein localises to the cytoplasmic vesicle. It is found in the phagosome. The protein resides in the nucleus. It localises to the cytoplasm. Its subcellular location is the cytosol. With respect to regulation, activity is strongly inhibited by SRGAP2C, which heterodimerize with SRGAP2/SRGAP2A, thereby reducing SRGAP2/SRGAP2A levels through proteasome-dependent degradation. Its function is as follows. Postsynaptic RAC1 GTPase activating protein (GAP) that plays a key role in neuronal morphogenesis and migration mainly during development of the cerebral cortex. Regulates excitatory and inhibitory synapse maturation and density in cortical pyramidal neurons. SRGAP2/SRGAP2A limits excitatory and inhibitory synapse density through its RAC1-specific GTPase activating activity, while it promotes maturation of both excitatory and inhibitory synapses through its ability to bind to the postsynaptic scaffolding protein HOMER1 at excitatory synapses, and the postsynaptic protein GPHN at inhibitory synapses. Mechanistically, acts by binding and deforming membranes, thereby regulating actin dynamics to regulate cell migration and differentiation. Promotes cell repulsion and contact inhibition of locomotion: localizes to protrusions with curved edges and controls the duration of RAC1 activity in contact protrusions. In non-neuronal cells, may also play a role in cell migration by regulating the formation of lamellipodia and filopodia. The protein is SLIT-ROBO Rho GTPase-activating protein 2 of Homo sapiens (Human).